Here is a 312-residue protein sequence, read N- to C-terminus: MAFKLATKAAAASPAAAHRGGLARGPEGTSRVAFGPAPRNKGLRAANNSATPVAKEERVDRSEILTLDSIRQVLIRLEDSIIFGLLERAQFCYNADTYDSNAFHMDGFGGSLVEYMVRETEKLHAQVGRYKSPDEHPFFPEDLPEPRLPPMQYPRVLHPIADSININKEIWKMYFDELLPRLVKKGSDGNAGSSALCDTTCLQALSKRIHYGKFVAEAKFQESPEAYMPAIIAQDRDQLMHLLTYETVERAIEHRVEAKAKIFGQEVNIGVEDNGSPPVYKIVPSLVAELYSYRIMPLTKEVQIAYLLRRLD.

The transit peptide at 1–44 (MAFKLATKAAAASPAAAHRGGLARGPEGTSRVAFGPAPRNKGLR) directs the protein to the chloroplast. The segment at 16-58 (AAHRGGLARGPEGTSRVAFGPAPRNKGLRAANNSATPVAKEER) is disordered. Residues Arg-58 and 190–193 (NAGS) contribute to the L-phenylalanine site. L-tyrosine contacts are provided by residues Arg-58 and 190–193 (NAGS). A Chorismate mutase domain is found at 58–312 (RVDRSEILTL…QIAYLLRRLD (255 aa)).

As to quaternary structure, homodimer. Interacts with Cmu1 of the fungal pathogen Ustilago maydis.

It is found in the plastid. The protein resides in the chloroplast. The enzyme catalyses chorismate = prephenate. It participates in metabolic intermediate biosynthesis; prephenate biosynthesis; prephenate from chorismate: step 1/1. Allosterically inhibited by tyrosine and phenylalanine. Activated by tryptophan. Its function is as follows. May play a role in chloroplast biogenesis. The sequence is that of Chorismate mutase 1, chloroplastic from Zea mays (Maize).